The primary structure comprises 407 residues: Protein ZNF365 (407 aa).

S16 is subject to Phosphoserine. The C2H2-type; degenerate zinc-finger motif lies at 26–51 (LRCPRCGDHTRFRSLSSLRAHLEFSH). A Phosphoserine modification is found at S138. The stretch at 169 to 297 (VEAVDRTIEK…QLEYYQSQQA (129 aa)) forms a coiled coil. At T175 the chain carries Phosphothreonine. The disordered stretch occupies residues 347–392 (LKKAKDDRASMQPAKAIHEQAESSRDLCRPPKKGELLGFGRKGNIR). A compositionally biased stretch (basic and acidic residues) spans 362–381 (AIHEQAESSRDLCRPPKKGE). The residue at position 369 (S369) is a Phosphoserine.

As to quaternary structure, homodimer. Interacts with NDE1 and NDEL1. Does not interact with TUBG1. Interacts with DISC1. Interacts with PARP1. Interacts with MCRS1. As to expression, isoform 1 is expressed in brain. Isoform 2 is expressed in placenta and at low level in lung and liver. Isoform 3 is expressed in kidney and pancreas. Isoform 1 is expressed exclusively in brain.

Its subcellular location is the cytoplasm. It is found in the cytoskeleton. The protein resides in the microtubule organizing center. It localises to the centrosome. In terms of biological role, involved in the regulation of neurogenesis. Negatively regulates neurite outgrowth. Involved in the morphogenesis of basket cells in the somatosensory cortex during embryogenesis. Involved in the positive regulation of oligodendrocyte differentiation during postnatal growth. Involved in dendritic arborization, morphogenesis of spine density dendrite, and establishment of postsynaptic dendrite density in cortical pyramidal neurons. Involved in homologous recombination (HR) repair pathway. Required for proper resolution of DNA double-strand breaks (DSBs) by HR. Is required for recovery of stalled replication forks, and directly contributes to genomic stability. Interacts with PARP1 and mediates MRE11-dependent DNA end resection during replication fork recovery. Contributes to genomic stability by preventing telomere dysfunction. The sequence is that of Protein ZNF365 (ZNF365) from Homo sapiens (Human).